The following is a 751-amino-acid chain: Proton-associated sugar transporter A (751 aa).

A run of 6 helical transmembrane segments spans residues 93–113 (ILFG…PVLL), 123–143 (SLVW…LGAW), 155–175 (RPFI…LLNG), 191–211 (WGIL…DSAD), 233–253 (IHAL…GIHW), and 268–288 (VIYV…LISI). A Phosphothreonine modification is found at T500. Transmembrane regions (helical) follow at residues 536–556 (GWLS…EVVF), 576–596 (VTMG…YSAI), 606–626 (VRTL…LATL), 630–650 (LYVV…LCTL), 688–708 (FLAQ…VGSA), and 710–730 (GVMY…SLCV).

It belongs to the glycoside-pentoside-hexuronide (GPH) cation symporter transporter (TC 2.A.2) family.

It localises to the membrane. The catalysed reaction is D-galactose(in) + H(+)(in) = D-galactose(out) + H(+)(out). It catalyses the reaction D-glucose(out) + H(+)(out) = D-glucose(in) + H(+)(in). In terms of biological role, proton-associated glucose transporter in the brain. This chain is Proton-associated sugar transporter A, found in Mus musculus (Mouse).